Reading from the N-terminus, the 293-residue chain is Probable E3 ubiquitin-protein ligase RNF144A-A (293 aa).

Positions 16–237 (PLVSCKLCLG…YDKGPCRNKL (222 aa)) are TRIAD supradomain. Positions 20, 23, 43, 46, 111, 116, 135, 138, 143, 146, 151, 156, 186, and 189 each coordinate Zn(2+). The RING-type 1 zinc finger occupies 20 to 70 (CKLCLGEFPLEQMTTITQCQCVFCTMCLKQYVELLIKEGFETAISCPDSAC). The IBR-type zinc finger occupies 91–156 (QRYRKLQFEK…KASWHPDQDC (66 aa)). The RING-type 2; atypical zinc finger occupies 186 to 215 (CPKCKVYIERDEGCAQMMCKNCKHAFCWYC). Residue C199 is part of the active site. C204, C207, C212, C215, H227, and C233 together coordinate Zn(2+). Residues 251–271 (VVGIFAGFGLLLLVASPFLLL) traverse the membrane as a helical segment.

The protein belongs to the RBR family. RNF144 subfamily.

The protein localises to the membrane. The catalysed reaction is [E2 ubiquitin-conjugating enzyme]-S-ubiquitinyl-L-cysteine + [acceptor protein]-L-lysine = [E2 ubiquitin-conjugating enzyme]-L-cysteine + [acceptor protein]-N(6)-ubiquitinyl-L-lysine.. Its pathway is protein modification; protein ubiquitination. Its function is as follows. E3 ubiquitin-protein ligase which accepts ubiquitin from E2 ubiquitin-conjugating enzymes ube2l3 and ube2l6 in the form of a thioester and then directly transfers the ubiquitin to targeted substrates. In Danio rerio (Zebrafish), this protein is Probable E3 ubiquitin-protein ligase RNF144A-A (rnf144aa).